A 158-amino-acid polypeptide reads, in one-letter code: 3-hydroxyacyl-[acyl-carrier-protein] dehydratase FabZ (158 aa).

Residue histidine 61 is part of the active site.

This sequence belongs to the thioester dehydratase family. FabZ subfamily.

The protein localises to the cytoplasm. It catalyses the reaction a (3R)-hydroxyacyl-[ACP] = a (2E)-enoyl-[ACP] + H2O. Involved in unsaturated fatty acids biosynthesis. Catalyzes the dehydration of short chain beta-hydroxyacyl-ACPs and long chain saturated and unsaturated beta-hydroxyacyl-ACPs. This Methylobacterium radiotolerans (strain ATCC 27329 / DSM 1819 / JCM 2831 / NBRC 15690 / NCIMB 10815 / 0-1) protein is 3-hydroxyacyl-[acyl-carrier-protein] dehydratase FabZ.